The primary structure comprises 347 residues: Anthranilate phosphoribosyltransferase (347 aa).

5-phospho-alpha-D-ribose 1-diphosphate contacts are provided by residues G88, 91 to 92 (GD), T96, 98 to 101 (NIST), 116 to 124 (KHGGRSVSS), and S128. Position 88 (G88) interacts with anthranilate. Residue S100 coordinates Mg(2+). Anthranilate is bound at residue R174. Positions 233 and 234 each coordinate Mg(2+).

This sequence belongs to the anthranilate phosphoribosyltransferase family. As to quaternary structure, homodimer. Mg(2+) serves as cofactor.

The catalysed reaction is N-(5-phospho-beta-D-ribosyl)anthranilate + diphosphate = 5-phospho-alpha-D-ribose 1-diphosphate + anthranilate. It functions in the pathway amino-acid biosynthesis; L-tryptophan biosynthesis; L-tryptophan from chorismate: step 2/5. In terms of biological role, catalyzes the transfer of the phosphoribosyl group of 5-phosphorylribose-1-pyrophosphate (PRPP) to anthranilate to yield N-(5'-phosphoribosyl)-anthranilate (PRA). The chain is Anthranilate phosphoribosyltransferase from Polaromonas sp. (strain JS666 / ATCC BAA-500).